Here is a 323-residue protein sequence, read N- to C-terminus: Beta-ketoacyl-[acyl-carrier-protein] synthase III (323 aa).

Catalysis depends on residues Cys-113 and His-250. Positions 251–255 (QANRR) are ACP-binding. Asn-280 is an active-site residue.

This sequence belongs to the thiolase-like superfamily. FabH family. Homodimer.

It is found in the cytoplasm. It carries out the reaction malonyl-[ACP] + acetyl-CoA + H(+) = 3-oxobutanoyl-[ACP] + CO2 + CoA. It participates in lipid metabolism; fatty acid biosynthesis. Its function is as follows. Catalyzes the condensation reaction of fatty acid synthesis by the addition to an acyl acceptor of two carbons from malonyl-ACP. Catalyzes the first condensation reaction which initiates fatty acid synthesis and may therefore play a role in governing the total rate of fatty acid production. Possesses both acetoacetyl-ACP synthase and acetyl transacylase activities. Its substrate specificity determines the biosynthesis of branched-chain and/or straight-chain of fatty acids. The sequence is that of Beta-ketoacyl-[acyl-carrier-protein] synthase III from Rhizobium rhizogenes (strain K84 / ATCC BAA-868) (Agrobacterium radiobacter).